A 226-amino-acid chain; its full sequence is V-type proton ATPase subunit E (226 aa).

This sequence belongs to the V-ATPase E subunit family. V-ATPase is a heteromultimeric enzyme made up of two complexes: the ATP-hydrolytic V1 complex and the proton translocation V0 complex. The V1 complex consists of three catalytic AB heterodimers that form a heterohexamer, three peripheral stalks each consisting of EG heterodimers, one central rotor including subunits D and F, and the regulatory subunits C and H. The proton translocation complex V0 consists of the proton transport subunit a, a ring of proteolipid subunits c9c'', rotary subunit d, subunits e and f, and the accessory subunits VhaAC45 and ATP6AP2.

Subunit of the V1 complex of vacuolar(H+)-ATPase (V-ATPase), a multisubunit enzyme composed of a peripheral complex (V1) that hydrolyzes ATP and a membrane integral complex (V0) that translocates protons. V-ATPase is responsible for acidifying and maintaining the pH of intracellular compartments and in some cell types, is targeted to the plasma membrane, where it is responsible for acidifying the extracellular environment. The polypeptide is V-type proton ATPase subunit E (VHA26) (Manduca sexta (Tobacco hawkmoth)).